A 197-amino-acid polypeptide reads, in one-letter code: Ribonuclease HII (197 aa).

The RNase H type-2 domain maps to 14 to 197 (EKIVGIDEAG…RSFNLGVNDD (184 aa)). The a divalent metal cation site is built by Asp20, Glu21, and Asp112.

The protein belongs to the RNase HII family. It depends on Mn(2+) as a cofactor. Mg(2+) is required as a cofactor.

It localises to the cytoplasm. It carries out the reaction Endonucleolytic cleavage to 5'-phosphomonoester.. Functionally, endonuclease that specifically degrades the RNA of RNA-DNA hybrids. The chain is Ribonuclease HII from Sulfurihydrogenibium sp. (strain YO3AOP1).